Here is a 260-residue protein sequence, read N- to C-terminus: Small ribosomal subunit protein cS22 (260 aa).

A chloroplast-targeting transit peptide spans 1-62; that stretch reads MATISSILPC…TNPPLLKVRA (62 aa). Residues 63 to 78 are compositionally biased toward low complexity; the sequence is VVTEETSSSSTASSSS. The segment at 63–83 is disordered; that stretch reads VVTEETSSSSTASSSSDGEGA. RRM domains follow at residues 84–162 and 184–260; these read RRLY…ITEK and YKVY…VNKA.

As to quaternary structure, component of the chloroplast small ribosomal subunit (SSU). Mature 70S chloroplast ribosomes of higher plants consist of a small (30S) and a large (50S) subunit. The 30S small subunit contains 1 molecule of ribosomal RNA (16S rRNA) and 24 different proteins. The 50S large subunit contains 3 rRNA molecules (23S, 5S and 4.5S rRNA) and 33 different proteins.

Its subcellular location is the plastid. It localises to the chloroplast. Component of the chloroplast ribosome (chloro-ribosome), a dedicated translation machinery responsible for the synthesis of chloroplast genome-encoded proteins, including proteins of the transcription and translation machinery and components of the photosynthetic apparatus. cS22 may have a role in the recruitment of stored chloroplast mRNAs for active protein synthesis. The protein is Small ribosomal subunit protein cS22 (PSRP2) of Spinacia oleracea (Spinach).